Reading from the N-terminus, the 617-residue chain is MSKCATPTPSTSSNSSDEAKRSPQPMSRGFPQRNMSTTSSNGSNSPRHRSLETPIVLQPATRFALANLTTTVLRLDFWDDNDPNSIFFCKSTFNIVTQCLDLPEKVIKTVKTHLEGEEDLTDIAPMIMSVREDPVYKTEGSTPFLASLLVAFVNQGNYDSRYRVFLRHLTTLLGVVWTEFEDVEDSLASTLLEEQFVESEHSRTVREKTARNKKIKRYLMIGAAGGVGGVLIGLTGGLAAPLVAASAGMLIGGGAVAGLATTAGAAVLGTTMGVAGAGFTGYKMKKRVGAIEEFSVETLSEGVSLSCSLVVSGWIESDTSPDQAFVHQWRHLRHTKEQYTLRYESNYLMELGNAIEYLMSFAVSVAIQQTLLETALAGLVSAVAWPVALMSVSSVLDNPWNVCVSRAAEVGEQLAEVLLSRSHGKRPITLIGFSLGARVIFHCLLTMSKRSESVGIIEDVILLGAPVTASPKEWSKVCTVVSGRVINGYCETDWLLRFLYRTMSAQFRIAGTGPIDNRNSKKIYNYNLSHIVKGHMDYSKRLTEVLNAVGVKVGPHSEDSVVDLTQLEGPHEATGQAEEAINYQSTGEEEEHPIVHPINLENIHEVKVLDSPHKNEF.

Low complexity-rich tracts occupy residues 1 to 16 (MSKCATPTPSTSSNSS) and 36 to 45 (STTSSNGSNS). Positions 1–49 (MSKCATPTPSTSSNSSDEAKRSPQPMSRGFPQRNMSTTSSNGSNSPRHR) are disordered. A run of 3 helical transmembrane segments spans residues 219–239 (LMIGAAGGVGGVLIGLTGGLA), 262–282 (TAGAAVLGTTMGVAGAGFTGY), and 427–447 (PITLIGFSLGARVIFHCLLTM).

The protein belongs to the TMCO4 family.

It localises to the membrane. This is an uncharacterized protein from Caenorhabditis elegans.